Here is a 906-residue protein sequence, read N- to C-terminus: Protein translocase subunit SecA (906 aa).

ATP-binding positions include glutamine 87, 105 to 109 (GEGKT), and aspartate 507. The span at 553 to 563 (RHESRRIDNQL) shows a compositional bias: basic and acidic residues. Disordered regions lie at residues 553-576 (RHES…PGSS) and 854-906 (LEEP…GRLA). Positions 890, 892, 901, and 902 each coordinate Zn(2+). Basic residues predominate over residues 896-906 (KKYKQCHGRLA).

Belongs to the SecA family. Monomer and homodimer. Part of the essential Sec protein translocation apparatus which comprises SecA, SecYEG and auxiliary proteins SecDF-YajC and YidC. Requires Zn(2+) as cofactor.

The protein resides in the cell inner membrane. It is found in the cytoplasm. The enzyme catalyses ATP + H2O + cellular proteinSide 1 = ADP + phosphate + cellular proteinSide 2.. Its function is as follows. Part of the Sec protein translocase complex. Interacts with the SecYEG preprotein conducting channel. Has a central role in coupling the hydrolysis of ATP to the transfer of proteins into and across the cell membrane, serving both as a receptor for the preprotein-SecB complex and as an ATP-driven molecular motor driving the stepwise translocation of polypeptide chains across the membrane. The sequence is that of Protein translocase subunit SecA from Methylococcus capsulatus (strain ATCC 33009 / NCIMB 11132 / Bath).